Here is a 61-residue protein sequence, read N- to C-terminus: uncharacterized protein (61 aa).

This sequence belongs to the DUP/COS family.

This is an uncharacterized protein from Saccharomyces cerevisiae (strain ATCC 204508 / S288c) (Baker's yeast).